We begin with the raw amino-acid sequence, 395 residues long: Probable nitrate/nitrite transporter NarK2 (395 aa).

12 helical membrane passes run 8-28, 45-65, 72-92, 98-118, 131-151, 157-177, 205-225, 244-266, 274-294, 301-321, 333-353, and 365-385; these read LVLA…IGPL, LLVA…GPLT, AMLI…GVAA, ALLV…AVGI, GFST…AFFT, WFGL…TAVV, LPVT…FVAF, AGAR…GWLS, VVLA…LQPP, ATFI…FAWV, VTGI…LVMG, and VGLL…ALHA.

The protein belongs to the major facilitator superfamily. Nitrate/nitrite porter (TC 2.A.1.8) family.

It localises to the cell membrane. Functionally, involved in excretion of nitrite produced by the dissimilatory reduction of nitrate. The chain is Probable nitrate/nitrite transporter NarK2 (narK2) from Mycobacterium tuberculosis (strain CDC 1551 / Oshkosh).